Consider the following 199-residue polypeptide: uncharacterized protein (199 aa).

Positions 38-169 constitute a Nudix hydrolase domain; it reads NRRAAVLIPI…SLDIHREGIN (132 aa). Positions 76 to 98 match the Nudix box motif; that stretch reads GKADPDDQSLISTALREAEEEVA. Mg(2+)-binding residues include glutamate 92 and glutamate 96.

It belongs to the Nudix hydrolase family. PCD1 subfamily. Mn(2+) is required as a cofactor. The cofactor is Mg(2+).

Its function is as follows. Probably mediates the hydrolysis of some nucleoside diphosphate derivatives. This is an uncharacterized protein from Yersinia pseudotuberculosis serotype I (strain IP32953).